Here is a 444-residue protein sequence, read N- to C-terminus: GTPase Der (444 aa).

EngA-type G domains are found at residues 2–167 (LKVA…LKEI) and 173–349 (FKFC…ENLN). GTP is bound by residues 8 to 15 (GKPNVGKS), 55 to 59 (DTGGL), 118 to 121 (NKSE), 179 to 186 (GRPNVGKS), 226 to 230 (DTAGI), and 291 to 294 (NKWD). In terms of domain architecture, KH-like spans 350–434 (LKFNSKILTD…PITLYFKNKT (85 aa)).

This sequence belongs to the TRAFAC class TrmE-Era-EngA-EngB-Septin-like GTPase superfamily. EngA (Der) GTPase family. In terms of assembly, associates with the 50S ribosomal subunit.

Its function is as follows. GTPase that plays an essential role in the late steps of ribosome biogenesis. The protein is GTPase Der of Malacoplasma penetrans (strain HF-2) (Mycoplasma penetrans).